The following is a 121-amino-acid chain: Large ribosomal subunit protein uL18 (121 aa).

This sequence belongs to the universal ribosomal protein uL18 family. In terms of assembly, part of the 50S ribosomal subunit; part of the 5S rRNA/L5/L18/L25 subcomplex. Contacts the 5S and 23S rRNAs.

This is one of the proteins that bind and probably mediate the attachment of the 5S RNA into the large ribosomal subunit, where it forms part of the central protuberance. This Paracidovorax citrulli (strain AAC00-1) (Acidovorax citrulli) protein is Large ribosomal subunit protein uL18.